Here is a 301-residue protein sequence, read N- to C-terminus: ATP synthase gamma chain (301 aa).

It belongs to the ATPase gamma chain family. In terms of assembly, F-type ATPases have 2 components, CF(1) - the catalytic core - and CF(0) - the membrane proton channel. CF(1) has five subunits: alpha(3), beta(3), gamma(1), delta(1), epsilon(1). CF(0) has three main subunits: a, b and c.

It localises to the cell inner membrane. Functionally, produces ATP from ADP in the presence of a proton gradient across the membrane. The gamma chain is believed to be important in regulating ATPase activity and the flow of protons through the CF(0) complex. This Helicobacter pylori (strain Shi470) protein is ATP synthase gamma chain.